A 405-amino-acid polypeptide reads, in one-letter code: Acetylornithine aminotransferase 1 (405 aa).

Pyridoxal 5'-phosphate-binding positions include 103–104 (GA) and F136. N(2)-acetyl-L-ornithine is bound at residue R139. 221–224 (DEVQ) is a binding site for pyridoxal 5'-phosphate. An N6-(pyridoxal phosphate)lysine modification is found at K250. S278 serves as a coordination point for N(2)-acetyl-L-ornithine. T279 provides a ligand contact to pyridoxal 5'-phosphate.

Belongs to the class-III pyridoxal-phosphate-dependent aminotransferase family. ArgD subfamily. In terms of assembly, homodimer. Pyridoxal 5'-phosphate is required as a cofactor.

It localises to the cytoplasm. The catalysed reaction is N(2)-acetyl-L-ornithine + 2-oxoglutarate = N-acetyl-L-glutamate 5-semialdehyde + L-glutamate. The protein operates within amino-acid biosynthesis; L-arginine biosynthesis; N(2)-acetyl-L-ornithine from L-glutamate: step 4/4. This is Acetylornithine aminotransferase 1 from Bradyrhizobium diazoefficiens (strain JCM 10833 / BCRC 13528 / IAM 13628 / NBRC 14792 / USDA 110).